Reading from the N-terminus, the 588-residue chain is MNNSINHKFHHISRTEYQELLAVSRGDAVADYIIDNVSILDLINGGEISGPIVIKGRYIAGVGAEYADAPALQRIDARGATAVPGFIDAHLHIESSMMTPVTFETATLPRGLTTVICDPHEIVNVMGEAGFAWFARCAEQARQNQYLQVSSCVPALEGCDVNGASFTLEQMLAWRDHPQVTGLAEMMDYPGVISGQNALLDKLDAFRHLTLDGHCPGLGGKELNAYIAAGIENCHESYQLEEGRRKLQLGMSLMIREGSAARNLNALAPLINEFNSPQCMLCTDDRNPWEIAHEGHIDALIRRLIEQHNVPLHVAYRVASWSTARHFGLNHLGLLAPGKQADIVLLSDARKVTVQQVLVKGEPIDAQTLQAEESARLAQSAPPYGNTIDRQPVSASDFALQFTPGKRYRVIEVIHNELITHSRSSVYSENGFDRDDVCFIAVLERYGQRLAPACGLLGGFGLNEGALAATVSHDSHNIVVIGRSAEEMALAVNQVIQDGGGLCVVRNGQVQSHLPLPIAGLMSTDTAQSLAEQIDALKAAARECGPLPDEPFIQMAFLSLPVIPALKLTSQGLFDGEKFAFTTLEFTE.

This sequence belongs to the metallo-dependent hydrolases superfamily. Adenine deaminase family. As to quaternary structure, homodimer. Mn(2+) is required as a cofactor.

It carries out the reaction adenine + H2O + H(+) = hypoxanthine + NH4(+). The sequence is that of Adenine deaminase from Escherichia coli O45:K1 (strain S88 / ExPEC).